Reading from the N-terminus, the 782-residue chain is Structure-specific endonuclease subunit SLX4 (782 aa).

Disordered regions lie at residues 63 to 91 (TPKP…MSAM) and 359 to 425 (KEHE…KKSK). Residues 73-84 (GLRKTGSRKSKK) are compositionally biased toward basic residues. A compositionally biased stretch (polar residues) spans 374–388 (PAQSLTQSQVPSSID).

Belongs to the SLX4 family. Forms a heterodimer with SLX1. Post-translationally, phosphorylated in response to DNA damage.

It localises to the nucleus. Its function is as follows. Regulatory subunit of the SLX1-SLX4 structure-specific endonuclease that resolves DNA secondary structures generated during DNA repair and recombination. Has endonuclease activity towards branched DNA substrates, introducing single-strand cuts in duplex DNA close to junctions with ss-DNA. The sequence is that of Structure-specific endonuclease subunit SLX4 from Scheffersomyces stipitis (strain ATCC 58785 / CBS 6054 / NBRC 10063 / NRRL Y-11545) (Yeast).